The sequence spans 128 residues: Pi-hexatoxin-Hi1c (128 aa).

The signal sequence occupies residues 1-19 (MKLRITLALTSVLAFCVFG). A propeptide spanning residues 20 to 47 (DKENENLMENLLEDDLLDIFTDAIHMER) is cleaved from the precursor. Intrachain disulfides connect Cys54–Cys69, Cys61–Cys74, Cys68–Cys84, Cys93–Cys108, Cys100–Cys113, and Cys107–Cys124. 2 Domain repeats span residues 54–84 (CIAK…HEVC) and 93–124 (CLEK…HPVC). Residues 54 to 124 (CIAKWKSCAG…ERRGNKHPVC (71 aa)) form a 2 X approximate repeats with cysteine pattern C-C-CC-C-C region.

It belongs to the psalmotoxin-1 family. Double-knot toxin subfamily. In terms of tissue distribution, expressed by the venom gland.

The protein localises to the secreted. Its function is as follows. This toxin potently and selectively inhibits ASIC1a, an isoform of the gene ASIC1. It incompletely inhibits ASIC1a activation in a pH-independent and slowly reversible manner. This toxin acts by binding to and stabilizing the closed state of the channel, thereby impeding the transition into a conducting state. This toxin may bind to the acidic pocket of ASIC1a, since mutation of a key residue of this pocket (Arg-350) abolishes the ability of the toxin to inhibit ASIC1a. In vivo, this toxin protects the brain from neuronal injury when administered up to 8 hours after stroke onset. This is Pi-hexatoxin-Hi1c from Hadronyche infensa (Fraser island funnel-web spider).